A 238-amino-acid polypeptide reads, in one-letter code: 7-cyano-7-deazaguanine synthase (238 aa).

An ATP-binding site is contributed by 12–22 (FSGGQDSGTCL). Positions 200, 215, 218, and 221 each coordinate Zn(2+).

This sequence belongs to the QueC family. Zn(2+) is required as a cofactor.

It carries out the reaction 7-carboxy-7-deazaguanine + NH4(+) + ATP = 7-cyano-7-deazaguanine + ADP + phosphate + H2O + H(+). The protein operates within purine metabolism; 7-cyano-7-deazaguanine biosynthesis. In terms of biological role, catalyzes the ATP-dependent conversion of 7-carboxy-7-deazaguanine (CDG) to 7-cyano-7-deazaguanine (preQ(0)). This chain is 7-cyano-7-deazaguanine synthase, found in Lawsonia intracellularis (strain PHE/MN1-00).